The following is a 369-amino-acid chain: N-succinylamino acid racemase (369 aa).

Residue K163 is the Proton donor of the active site. The Mg(2+) site is built by D188, E213, and D238. Residue K262 is the Proton acceptor of the active site.

It belongs to the mandelate racemase/muconate lactonizing enzyme family. MenC type 2 subfamily. As to quaternary structure, homooctamer. Tetramer of dimers. It depends on a divalent metal cation as a cofactor.

The enzyme catalyses (1R,6R)-6-hydroxy-2-succinyl-cyclohexa-2,4-diene-1-carboxylate = 2-succinylbenzoate + H2O. Acts as a N-succinylamino acid racemase (NSAR) that catalyzes the racemization of N-succinyl-L-phenylglycine. Also converts 2-succinyl-6-hydroxy-2,4-cyclohexadiene-1-carboxylate (SHCHC) to 2-succinylbenzoate (OSB). Catalyzes both N-succinylamino acid racemization and OSB synthesis at equivalent rates. However, NSAR activity is probably the protein's biological function, because menaquinone biosynthesis genes are missing in this species. In Thermus thermophilus (strain ATCC 27634 / DSM 579 / HB8), this protein is N-succinylamino acid racemase.